The sequence spans 197 residues: 3-isopropylmalate dehydratase small subunit (197 aa).

Belongs to the LeuD family. LeuD type 1 subfamily. In terms of assembly, heterodimer of LeuC and LeuD.

The enzyme catalyses (2R,3S)-3-isopropylmalate = (2S)-2-isopropylmalate. It participates in amino-acid biosynthesis; L-leucine biosynthesis; L-leucine from 3-methyl-2-oxobutanoate: step 2/4. Catalyzes the isomerization between 2-isopropylmalate and 3-isopropylmalate, via the formation of 2-isopropylmaleate. This Streptomyces coelicolor (strain ATCC BAA-471 / A3(2) / M145) protein is 3-isopropylmalate dehydratase small subunit (leuD).